A 500-amino-acid polypeptide reads, in one-letter code: MTEHIQDENKLIAERRAKLEHVRKNCPANGHPNTFRRKHKAAELQAQFGDKTKEELEALGFQTAIAGRVMAKRGPFLVLQDVSGRIQAYADKGVQADLKDRYAGLDIGDIIGVEGTLHLSGKGDLYVNMERYELLTKALRPLPEKFHGLTDQETRYRQRYVDLIVNEDSREAFKMRSKVVAAIRNFMIKKEFMEVETPMMHVIPGGASARPFVTHHNALDIEMYLRIAPELYLKRLVVGGFERVFEINRNFRNEGLSPRHNPEFTMMEFYMAYADYKDLIDLTEEMLSSIAKELLGDTKLPYGEHVIDFGGPYTRMSMLEAIKHYNPDNATIQAMTYEEVKNIDFMRKLAKDVGIETETFWSCGQLLEEIFGETAEPKLMQPTFITGYPADISPLARRSDGNDFITDRFEFFIGGREVANGFSELNDAEDQDNRFKAQVEAKDAGDDEAMFYDADFITALEHGLPPTAGQGIGIDRLVMLFTNTHTIRDVILFPAMRPQA.

Mg(2+) is bound by residues E410 and E417.

Belongs to the class-II aminoacyl-tRNA synthetase family. As to quaternary structure, homodimer. Requires Mg(2+) as cofactor.

It localises to the cytoplasm. The catalysed reaction is tRNA(Lys) + L-lysine + ATP = L-lysyl-tRNA(Lys) + AMP + diphosphate. This chain is Lysine--tRNA ligase, found in Shewanella amazonensis (strain ATCC BAA-1098 / SB2B).